The sequence spans 335 residues: Vitamin B12 import system permease protein BtuC (335 aa).

The next 9 helical transmembrane spans lie at 22-42 (LLLL…AGDV), 67-87 (LAVM…QSLF), 94-114 (PGLL…VLLG), 117-137 (LLPV…MTFL), 153-173 (LLVG…AVYF), 200-220 (LVLA…ALNF), 243-263 (VLAI…IGFV), 281-301 (YLLP…DVVA), and 308-328 (AELP…IWLL).

It belongs to the binding-protein-dependent transport system permease family. FecCD subfamily. The complex is composed of two ATP-binding proteins (BtuD), two transmembrane proteins (BtuC) and a solute-binding protein (BtuF).

The protein localises to the cell inner membrane. Part of the ABC transporter complex BtuCDF involved in vitamin B12 import. Involved in the translocation of the substrate across the membrane. This chain is Vitamin B12 import system permease protein BtuC, found in Serratia proteamaculans (strain 568).